The primary structure comprises 607 residues: MNKEERAKRQSKIRNFSIIAHIDHGKSTLADRILEKTNALTQREMKAQLLDSMDLERERGITIKLNAIQLNYKAKDGEEYILHLIDTPGHVDFTYEVSRSLAACEGAILVVDAAQGIEAQTLANVYLALDNNLEILPVINKIDLPSADPERVRQEVEDVIGLDASEAVLASAKAGIGIEEILEQIVEKVPAPTGDSEEPLQCMIFDSLYDPYRGVIAYIRVVNGTVKVGDKVRMMATGKEFEVTEVGVFTPKTTQRDELTVGDVGFLAASIKNVGDTRVGDTITHAKRPAAEPLAGYRKLNPMVFCGLYPIDSARYNDLRDALEKLELNDSALEFEPETSQALGFGFRCGFLGLLHMEILQERIEREFKIDLITTAPSVIYKVFLTNGEDMIVDNPSNMPDPQTIDRVEEPFVKAAIMVPNDYVGAVMEICQGKRGTFIDMQYLDETRVTLTYEIPLSEIVYDFFDQLKSNTKGYASFDYELIGYKPSKLVKMDILLNSEQVDALSFIVHRDSAYDRGKVIVEKLKELIPRQQFEVPIQATIGNKVVARSTIKAMRKNVLAKCYGGDISRKRKLLDKQKEGKKRMKSVGSVEVPQEAFMAVLKMDDN.

In terms of domain architecture, tr-type G spans 11–193; that stretch reads SKIRNFSIIA…QIVEKVPAPT (183 aa). Residues 23-28 and 140-143 contribute to the GTP site; these read DHGKST and NKID.

The protein belongs to the TRAFAC class translation factor GTPase superfamily. Classic translation factor GTPase family. LepA subfamily.

The protein resides in the cell membrane. The enzyme catalyses GTP + H2O = GDP + phosphate + H(+). In terms of biological role, required for accurate and efficient protein synthesis under certain stress conditions. May act as a fidelity factor of the translation reaction, by catalyzing a one-codon backward translocation of tRNAs on improperly translocated ribosomes. Back-translocation proceeds from a post-translocation (POST) complex to a pre-translocation (PRE) complex, thus giving elongation factor G a second chance to translocate the tRNAs correctly. Binds to ribosomes in a GTP-dependent manner. The protein is Elongation factor 4 of Bacillus anthracis (strain A0248).